The chain runs to 129 residues: Small ribosomal subunit protein uS11 (129 aa).

It belongs to the universal ribosomal protein uS11 family. As to quaternary structure, part of the 30S ribosomal subunit. Interacts with proteins S7 and S18. Binds to IF-3.

Functionally, located on the platform of the 30S subunit, it bridges several disparate RNA helices of the 16S rRNA. Forms part of the Shine-Dalgarno cleft in the 70S ribosome. The sequence is that of Small ribosomal subunit protein uS11 from Methylorubrum populi (strain ATCC BAA-705 / NCIMB 13946 / BJ001) (Methylobacterium populi).